We begin with the raw amino-acid sequence, 55 residues long: Caltrin-like protein 2 (55 aa).

One can recognise a WAP domain in the interval 7–55 (AINRPGSCPRVMIYCPARHPPNKCTSDYDCPKPQKCCPGYCGKQCYQPE).

Glycosylated.

Functionally, inhibits calcium transport into spermatozoa. The chain is Caltrin-like protein 2 from Cavia porcellus (Guinea pig).